Reading from the N-terminus, the 194-residue chain is Imidazoleglycerol-phosphate dehydratase (194 aa).

It belongs to the imidazoleglycerol-phosphate dehydratase family.

It localises to the cytoplasm. The enzyme catalyses D-erythro-1-(imidazol-4-yl)glycerol 3-phosphate = 3-(imidazol-4-yl)-2-oxopropyl phosphate + H2O. The protein operates within amino-acid biosynthesis; L-histidine biosynthesis; L-histidine from 5-phospho-alpha-D-ribose 1-diphosphate: step 6/9. The protein is Imidazoleglycerol-phosphate dehydratase of Caldicellulosiruptor saccharolyticus (strain ATCC 43494 / DSM 8903 / Tp8T 6331).